We begin with the raw amino-acid sequence, 301 residues long: Growth-regulating factor 2 (301 aa).

In terms of domain architecture, QLQ spans 11–46; sequence LFTATQWQELEHQALIYKYMAAGAPVPPDLLLHLRH. 2 consecutive short sequence motifs (bipartite nuclear localization signal) follow at residues 83-102 and 120-127; these read RRVEDPEPGRCRRTDGKKWR and RGKNRSRK. Residues 87-131 form the WRC domain; the sequence is DPEPGRCRRTDGKKWRCSREAYGESKYCEKHMHRGKNRSRKPVEM.

It belongs to the GRF family.

It localises to the nucleus. Functionally, transcription activator that plays a regulatory role in gibberellin-induced stem elongation. The chain is Growth-regulating factor 2 (GRF2) from Oryza sativa subsp. japonica (Rice).